A 173-amino-acid chain; its full sequence is Photosystem I assembly protein Ycf3 (173 aa).

TPR repeat units follow at residues Ala-35 to Pro-68, Gly-72 to Gln-105, and Gly-120 to Gly-153.

It belongs to the Ycf3 family.

It is found in the cellular thylakoid membrane. Its function is as follows. Essential for the assembly of the photosystem I (PSI) complex. May act as a chaperone-like factor to guide the assembly of the PSI subunits. The sequence is that of Photosystem I assembly protein Ycf3 from Synechococcus sp. (strain CC9902).